The chain runs to 400 residues: Formate-dependent phosphoribosylglycinamide formyltransferase (400 aa).

N(1)-(5-phospho-beta-D-ribosyl)glycinamide contacts are provided by residues 22–23 (EL) and E82. ATP contacts are provided by residues R115, K156, 161 to 166 (SSGKGQ), 196 to 199 (EGFI), and E204. Residues 120–309 (RLAAETLGLP…EFALHARAIL (190 aa)) form the ATP-grasp domain. E268 and E280 together coordinate Mg(2+). Residues D287, K361, and 368–369 (RR) contribute to the N(1)-(5-phospho-beta-D-ribosyl)glycinamide site.

This sequence belongs to the PurK/PurT family. Homodimer.

It carries out the reaction N(1)-(5-phospho-beta-D-ribosyl)glycinamide + formate + ATP = N(2)-formyl-N(1)-(5-phospho-beta-D-ribosyl)glycinamide + ADP + phosphate + H(+). It functions in the pathway purine metabolism; IMP biosynthesis via de novo pathway; N(2)-formyl-N(1)-(5-phospho-D-ribosyl)glycinamide from N(1)-(5-phospho-D-ribosyl)glycinamide (formate route): step 1/1. Functionally, involved in the de novo purine biosynthesis. Catalyzes the transfer of formate to 5-phospho-ribosyl-glycinamide (GAR), producing 5-phospho-ribosyl-N-formylglycinamide (FGAR). Formate is provided by PurU via hydrolysis of 10-formyl-tetrahydrofolate. This Xanthomonas axonopodis pv. citri (strain 306) protein is Formate-dependent phosphoribosylglycinamide formyltransferase.